The sequence spans 193 residues: Holliday junction branch migration complex subunit RuvA (193 aa).

Positions 1–64 (MIGRIAGVLL…EDAHLLYGFG (64 aa)) are domain I. A domain II region spans residues 65–139 (TAEERSTFRE…GKIGADLGAM (75 aa)). The segment at 139 to 143 (MAGAA) is flexible linker. Residues 144–193 (SASDHASDILNALLALGYSEKEALTAVKNVPAGTGVSEGIKLALKALSKG) form a domain III region.

The protein belongs to the RuvA family. In terms of assembly, homotetramer. Forms an RuvA(8)-RuvB(12)-Holliday junction (HJ) complex. HJ DNA is sandwiched between 2 RuvA tetramers; dsDNA enters through RuvA and exits via RuvB. An RuvB hexamer assembles on each DNA strand where it exits the tetramer. Each RuvB hexamer is contacted by two RuvA subunits (via domain III) on 2 adjacent RuvB subunits; this complex drives branch migration. In the full resolvosome a probable DNA-RuvA(4)-RuvB(12)-RuvC(2) complex forms which resolves the HJ.

Its subcellular location is the cytoplasm. Its function is as follows. The RuvA-RuvB-RuvC complex processes Holliday junction (HJ) DNA during genetic recombination and DNA repair, while the RuvA-RuvB complex plays an important role in the rescue of blocked DNA replication forks via replication fork reversal (RFR). RuvA specifically binds to HJ cruciform DNA, conferring on it an open structure. The RuvB hexamer acts as an ATP-dependent pump, pulling dsDNA into and through the RuvAB complex. HJ branch migration allows RuvC to scan DNA until it finds its consensus sequence, where it cleaves and resolves the cruciform DNA. This Paraburkholderia phytofirmans (strain DSM 17436 / LMG 22146 / PsJN) (Burkholderia phytofirmans) protein is Holliday junction branch migration complex subunit RuvA.